We begin with the raw amino-acid sequence, 280 residues long: Pantothenate synthetase (280 aa).

Methionine 26–histidine 33 contributes to the ATP binding site. Histidine 33 functions as the Proton donor in the catalytic mechanism. Glutamine 57 provides a ligand contact to (R)-pantoate. Glutamine 57 is a binding site for beta-alanine. Glycine 147–aspartate 150 serves as a coordination point for ATP. Position 153 (glutamine 153) interacts with (R)-pantoate. Residue leucine 184 to arginine 187 coordinates ATP.

The protein belongs to the pantothenate synthetase family. Homodimer.

The protein resides in the cytoplasm. It catalyses the reaction (R)-pantoate + beta-alanine + ATP = (R)-pantothenate + AMP + diphosphate + H(+). It functions in the pathway cofactor biosynthesis; (R)-pantothenate biosynthesis; (R)-pantothenate from (R)-pantoate and beta-alanine: step 1/1. Catalyzes the condensation of pantoate with beta-alanine in an ATP-dependent reaction via a pantoyl-adenylate intermediate. In Verminephrobacter eiseniae (strain EF01-2), this protein is Pantothenate synthetase.